We begin with the raw amino-acid sequence, 133 residues long: Homeobox protein HD-5 (133 aa).

Positions 34–93 (SKRSRLKLSGQQIDVLESNFKIDSHPNSATKSLLSNALSIPLKNIQIWFQNRRAKEKTAR) form a DNA-binding region, homeobox. Positions 86–109 (RAKEKTARDGGRRRSGNAEIEDGE) are disordered.

It localises to the nucleus. The protein is Homeobox protein HD-5 (HD-5) of Encephalitozoon cuniculi (strain GB-M1) (Microsporidian parasite).